Consider the following 333-residue polypeptide: Holliday junction branch migration complex subunit RuvB (333 aa).

The interval Met1–Tyr182 is large ATPase domain (RuvB-L). ATP is bound by residues Leu21, Arg22, Gly63, Lys66, Thr67, Thr68, Glu129–Tyr131, Arg172, Tyr182, and Arg219. A Mg(2+)-binding site is contributed by Thr67. The small ATPAse domain (RuvB-S) stretch occupies residues Glu183–His253. Residues Ala256 to Glu333 form a head domain (RuvB-H) region. DNA is bound by residues Arg311 and Arg316.

This sequence belongs to the RuvB family. Homohexamer. Forms an RuvA(8)-RuvB(12)-Holliday junction (HJ) complex. HJ DNA is sandwiched between 2 RuvA tetramers; dsDNA enters through RuvA and exits via RuvB. An RuvB hexamer assembles on each DNA strand where it exits the tetramer. Each RuvB hexamer is contacted by two RuvA subunits (via domain III) on 2 adjacent RuvB subunits; this complex drives branch migration. In the full resolvosome a probable DNA-RuvA(4)-RuvB(12)-RuvC(2) complex forms which resolves the HJ.

The protein localises to the cytoplasm. The catalysed reaction is ATP + H2O = ADP + phosphate + H(+). Functionally, the RuvA-RuvB-RuvC complex processes Holliday junction (HJ) DNA during genetic recombination and DNA repair, while the RuvA-RuvB complex plays an important role in the rescue of blocked DNA replication forks via replication fork reversal (RFR). RuvA specifically binds to HJ cruciform DNA, conferring on it an open structure. The RuvB hexamer acts as an ATP-dependent pump, pulling dsDNA into and through the RuvAB complex. RuvB forms 2 homohexamers on either side of HJ DNA bound by 1 or 2 RuvA tetramers; 4 subunits per hexamer contact DNA at a time. Coordinated motions by a converter formed by DNA-disengaged RuvB subunits stimulates ATP hydrolysis and nucleotide exchange. Immobilization of the converter enables RuvB to convert the ATP-contained energy into a lever motion, pulling 2 nucleotides of DNA out of the RuvA tetramer per ATP hydrolyzed, thus driving DNA branch migration. The RuvB motors rotate together with the DNA substrate, which together with the progressing nucleotide cycle form the mechanistic basis for DNA recombination by continuous HJ branch migration. Branch migration allows RuvC to scan DNA until it finds its consensus sequence, where it cleaves and resolves cruciform DNA. The sequence is that of Holliday junction branch migration complex subunit RuvB from Exiguobacterium sp. (strain ATCC BAA-1283 / AT1b).